The chain runs to 46 residues: Large ribosomal subunit protein bL36 (46 aa).

Belongs to the bacterial ribosomal protein bL36 family.

The sequence is that of Large ribosomal subunit protein bL36 from Photorhabdus laumondii subsp. laumondii (strain DSM 15139 / CIP 105565 / TT01) (Photorhabdus luminescens subsp. laumondii).